A 133-amino-acid chain; its full sequence is Exosome complex protein C1739.07 (133 aa).

The tract at residues 96–133 is disordered; it reads VNPKTEAVNTSNAAISSSSSNRPKVAKDAATRIIKHHT. Residues 102–116 are compositionally biased toward low complexity; the sequence is AVNTSNAAISSSSSN.

Belongs to the C1D family. Component of the exosome multienzyme ribonuclease complex. Interacts with cut3.

Its subcellular location is the cytoplasm. It is found in the nucleus. Its function is as follows. Required for exosome-dependent processing of pre-rRNA and small nucleolar RNA (snRNA) precursors. Involved in processing of 35S pre-rRNA at the A0, A1 and A2 sites. The polypeptide is Exosome complex protein C1739.07 (Schizosaccharomyces pombe (strain 972 / ATCC 24843) (Fission yeast)).